Reading from the N-terminus, the 298-residue chain is Aspartate carbamoyltransferase catalytic subunit (298 aa).

2 residues coordinate carbamoyl phosphate: Arg53 and Thr54. L-aspartate is bound at residue Lys81. 3 residues coordinate carbamoyl phosphate: Arg103, His132, and Gln135. L-aspartate contacts are provided by Arg166 and Arg218. Residues Gly259 and Pro260 each coordinate carbamoyl phosphate.

Belongs to the aspartate/ornithine carbamoyltransferase superfamily. ATCase family. As to quaternary structure, heterododecamer (2C3:3R2) of six catalytic PyrB chains organized as two trimers (C3), and six regulatory PyrI chains organized as three dimers (R2).

The enzyme catalyses carbamoyl phosphate + L-aspartate = N-carbamoyl-L-aspartate + phosphate + H(+). It functions in the pathway pyrimidine metabolism; UMP biosynthesis via de novo pathway; (S)-dihydroorotate from bicarbonate: step 2/3. Catalyzes the condensation of carbamoyl phosphate and aspartate to form carbamoyl aspartate and inorganic phosphate, the committed step in the de novo pyrimidine nucleotide biosynthesis pathway. The polypeptide is Aspartate carbamoyltransferase catalytic subunit (Anaplasma marginale (strain St. Maries)).